The primary structure comprises 475 residues: MSPKTETKASVGFKAGVKDYRLTYYTPEYQTKDTDILAAFRVTPQPGVPPEEAGAAVAAESSTGTWTTVWTDGLTSLDRYKGRCYDIEPVPGEESQFIAYVAYPLDLFEEGSVTNLFTSIVGNVFGFKALRALRLEDLRIPPAYSKTFQGPPHGIQVERDKLNKYGRPLLGCTIKPKLGLSAKNYGRAVYECLRGGLDFTKDDENVNSQPFMRWRDRFVFCAEAIYKAQAETGEIKGHYLNATAGTCEEMMKRAVFARELGVPIVMHDYLTGGFTANTSLAHYCRDNGLLLHIHRAMHAVIDRQRIHGMHFRVLAKALRMSGGDHIHAGTVVGKLEGERDVTLGFVDLLRDDFIEKDRSRGIYFTQDWVSMPGVLPVASGGIHVWHMPALTEIFGDDSVLQFGGGTLGHPWGNAPGAVANRVALEACVQARNEGRDLAREGNEVIREASKWSPELAAACEVWKEIKFEFEAIDVL.

Positions 1-2 (MS) are excised as a propeptide. Residue proline 3 is modified to N-acetylproline. An N6,N6,N6-trimethyllysine modification is found at lysine 14. 2 residues coordinate substrate: asparagine 123 and threonine 173. Lysine 175 functions as the Proton acceptor in the catalytic mechanism. Residue lysine 177 participates in substrate binding. Mg(2+) contacts are provided by lysine 201, aspartate 203, and glutamate 204. An N6-carboxylysine modification is found at lysine 201. Histidine 294 serves as the catalytic Proton acceptor. 3 residues coordinate substrate: arginine 295, histidine 327, and serine 379.

It belongs to the RuBisCO large chain family. Type I subfamily. Heterohexadecamer of 8 large chains and 8 small chains; disulfide-linked. The disulfide link is formed within the large subunit homodimers. Requires Mg(2+) as cofactor. Post-translationally, the disulfide bond which can form in the large chain dimeric partners within the hexadecamer appears to be associated with oxidative stress and protein turnover.

The protein localises to the plastid. The protein resides in the chloroplast. It catalyses the reaction 2 (2R)-3-phosphoglycerate + 2 H(+) = D-ribulose 1,5-bisphosphate + CO2 + H2O. The enzyme catalyses D-ribulose 1,5-bisphosphate + O2 = 2-phosphoglycolate + (2R)-3-phosphoglycerate + 2 H(+). RuBisCO catalyzes two reactions: the carboxylation of D-ribulose 1,5-bisphosphate, the primary event in carbon dioxide fixation, as well as the oxidative fragmentation of the pentose substrate in the photorespiration process. Both reactions occur simultaneously and in competition at the same active site. In Cedrus deodara (Deodar cedar), this protein is Ribulose bisphosphate carboxylase large chain.